Consider the following 108-residue polypeptide: Cell division topological specificity factor (108 aa).

It belongs to the MinE family.

Its function is as follows. Prevents the cell division inhibition by proteins MinC and MinD at internal division sites while permitting inhibition at polar sites. This ensures cell division at the proper site by restricting the formation of a division septum at the midpoint of the long axis of the cell. This Prochlorococcus marinus (strain MIT 9215) protein is Cell division topological specificity factor.